The primary structure comprises 320 residues: o-succinylbenzoate synthase (320 aa).

The Proton donor role is filled by K133. D161, E190, and D213 together coordinate Mg(2+). K235 (proton acceptor) is an active-site residue.

The protein belongs to the mandelate racemase/muconate lactonizing enzyme family. MenC type 1 subfamily. Requires a divalent metal cation as cofactor.

It catalyses the reaction (1R,6R)-6-hydroxy-2-succinyl-cyclohexa-2,4-diene-1-carboxylate = 2-succinylbenzoate + H2O. Its pathway is quinol/quinone metabolism; 1,4-dihydroxy-2-naphthoate biosynthesis; 1,4-dihydroxy-2-naphthoate from chorismate: step 4/7. It functions in the pathway quinol/quinone metabolism; menaquinone biosynthesis. In terms of biological role, converts 2-succinyl-6-hydroxy-2,4-cyclohexadiene-1-carboxylate (SHCHC) to 2-succinylbenzoate (OSB). This is o-succinylbenzoate synthase from Escherichia coli O17:K52:H18 (strain UMN026 / ExPEC).